Consider the following 523-residue polypeptide: uncharacterized protein (523 aa).

A compositionally biased stretch (polar residues) spans 1-14; the sequence is MAVSKNIKSNVSTH. Disordered stretches follow at residues 1–36, 51–187, and 200–224; these read MAVS…VKKA, HSSE…VVSS, and QKQE…EMEK. The span at 87-97 shows a compositional bias: basic and acidic residues; sequence DNRGTRLKGDI. Composition is skewed to acidic residues over residues 117–130 and 138–182; these read DMEE…DNEY and QDDD…DDEN. Basic and acidic residues predominate over residues 200-210; that stretch reads QKQEKEEEKQP.

The protein belongs to the AATF family.

This is an uncharacterized protein from Dictyostelium discoideum (Social amoeba).